Consider the following 403-residue polypeptide: 1-deoxy-D-xylulose 5-phosphate reductoisomerase (403 aa).

Positions 18, 19, 20, 21, 46, and 132 each coordinate NADPH. K133 is a 1-deoxy-D-xylulose 5-phosphate binding site. E134 contributes to the NADPH binding site. D158 serves as a coordination point for Mn(2+). 4 residues coordinate 1-deoxy-D-xylulose 5-phosphate: S159, E160, S189, and H212. Mn(2+) is bound at residue E160. G218 provides a ligand contact to NADPH. Positions 225, 230, 231, and 234 each coordinate 1-deoxy-D-xylulose 5-phosphate. E234 contributes to the Mn(2+) binding site.

It belongs to the DXR family. It depends on Mg(2+) as a cofactor. Mn(2+) is required as a cofactor.

The catalysed reaction is 2-C-methyl-D-erythritol 4-phosphate + NADP(+) = 1-deoxy-D-xylulose 5-phosphate + NADPH + H(+). It participates in isoprenoid biosynthesis; isopentenyl diphosphate biosynthesis via DXP pathway; isopentenyl diphosphate from 1-deoxy-D-xylulose 5-phosphate: step 1/6. Functionally, catalyzes the NADPH-dependent rearrangement and reduction of 1-deoxy-D-xylulose-5-phosphate (DXP) to 2-C-methyl-D-erythritol 4-phosphate (MEP). The polypeptide is 1-deoxy-D-xylulose 5-phosphate reductoisomerase (Aromatoleum aromaticum (strain DSM 19018 / LMG 30748 / EbN1) (Azoarcus sp. (strain EbN1))).